The following is a 602-amino-acid chain: Potassium-transporting ATPase potassium-binding subunit (602 aa).

Transmembrane regions (helical) follow at residues 3-23, 64-84, 135-155, 178-198, 282-302, 313-333, 418-438, 456-476, 522-542, and 565-585; these read ANNL…AVPV, QYAL…YALL, GLTV…LALI, LYVL…QGVI, FSNF…CLVF, VAVL…ETSA, GLYG…LMIG, VSIV…IAVL, WMTA…VLAI, and LFVV…YMPA.

It belongs to the KdpA family. The system is composed of three essential subunits: KdpA, KdpB and KdpC.

The protein resides in the cell inner membrane. Functionally, part of the high-affinity ATP-driven potassium transport (or Kdp) system, which catalyzes the hydrolysis of ATP coupled with the electrogenic transport of potassium into the cytoplasm. This subunit binds the periplasmic potassium ions and delivers the ions to the membrane domain of KdpB through an intramembrane tunnel. The sequence is that of Potassium-transporting ATPase potassium-binding subunit from Burkholderia pseudomallei (strain K96243).